A 428-amino-acid chain; its full sequence is MSKSETLYNLAQQVIPGGVNSPVRAFNGVGGTPLFIERANGAYIYDADGRAYLDYVGSWGPMVLGHNHPAIRHAVTDAVQKGLSFGAPTAAEVEMANLVTELVPSMDMVRMVNSGTEATMSAIRLARGYTGRDKIIKFEGCYHGHADCLLVKAGSGALTMGQPNSPGVPADFVKHTLTCTYNDLNSVRQAFENYPEEIACIIVEPVAGNMNCVPPKADFLPGLRALCDEFGALLIIDEVMTGFRVALGGAQAYYDVDPDLTCLGKIIGGGMPVGAFGGHKEVMSQLAPIGPVYQAGTLSGNPIAMAAGLACLQEVSQPGVHQTLDELTTMLADGLLEKAQQAGIPMVVNHVGGMFGLFFTDAKEVTCYQDVMNCDVERFKQFFHLMLEKRIYLAPSAFEAGFMSIAHSKEDIQRTIDAAEYAFSKMKA.

Lys-265 is subject to N6-(pyridoxal phosphate)lysine.

This sequence belongs to the class-III pyridoxal-phosphate-dependent aminotransferase family. HemL subfamily. Homodimer. Pyridoxal 5'-phosphate is required as a cofactor.

The protein resides in the cytoplasm. The catalysed reaction is (S)-4-amino-5-oxopentanoate = 5-aminolevulinate. The protein operates within porphyrin-containing compound metabolism; protoporphyrin-IX biosynthesis; 5-aminolevulinate from L-glutamyl-tRNA(Glu): step 2/2. This chain is Glutamate-1-semialdehyde 2,1-aminomutase, found in Proteus mirabilis (strain HI4320).